The following is a 500-amino-acid chain: Potassium/proton antiporter CemA (500 aa).

The chain crosses the membrane as a helical span at residues 129–149 (LFLTTIKTIFILFFVPFLVNF). The tract at residues 204-354 (HQTHRDSKPL…GSLDSIKNKD (151 aa)) is insert. Helical transmembrane passes span 378-398 (ITNF…LITL), 425-445 (ILLI…ELFF), and 461-481 (IFLL…YLIF).

Belongs to the CemA family.

It is found in the plastid. Its subcellular location is the chloroplast inner membrane. It carries out the reaction K(+)(in) + H(+)(out) = K(+)(out) + H(+)(in). Its function is as follows. Contributes to K(+)/H(+) antiport activity by supporting proton efflux to control proton extrusion and homeostasis in chloroplasts in a light-dependent manner to modulate photosynthesis. Prevents excessive induction of non-photochemical quenching (NPQ) under continuous-light conditions. Indirectly promotes efficient inorganic carbon uptake into chloroplasts. This chain is Potassium/proton antiporter CemA, found in Chlamydomonas reinhardtii (Chlamydomonas smithii).